Consider the following 260-residue polypeptide: Dehydrogenase/reductase SDR family member 4 (260 aa).

18–42 (IVTASTDGIGLAIARRLAQDGAHVV) contacts NADP(+). The residue at position 74 (Lys74) is an N6-acetyllysine; alternate. N6-succinyllysine; alternate is present on Lys74. Ser151 provides a ligand contact to substrate. The Proton acceptor role is filled by Tyr164. Lys168 contributes to the NADP(+) binding site. Lys198 is subject to N6-acetyllysine; alternate. Position 198 is an N6-succinyllysine; alternate (Lys198). The residue at position 202 (Ser202) is a Phosphoserine. Lys209 carries the N6-succinyllysine modification. The short motif at 258–260 (SRL) is the Peroxisomal targeting signal element.

Belongs to the short-chain dehydrogenases/reductases (SDR) family. Homotetramer. In terms of tissue distribution, detected in liver and kidney. Detected at lower levels in heart, lung, spleen, small intestine, testis, brain and stomach.

It is found in the peroxisome. The enzyme catalyses a secondary alcohol + NADP(+) = a ketone + NADPH + H(+). The catalysed reaction is 3alpha-hydroxy-5beta-pregnan-20-one + NADP(+) = 5beta-pregnan-3,20-dione + NADPH + H(+). It carries out the reaction 5beta-dihydrotestosterone + NADPH + H(+) = 5beta-androstane-3alpha,17beta-diol + NADP(+). It catalyses the reaction all-trans-retinol + NADP(+) = all-trans-retinal + NADPH + H(+). The enzyme catalyses isatin + NADPH + H(+) = 3-hydroxyindolin-2-one + NADP(+). Inhibited by flavonoids (kaempferol, quercetin, quercitrin, genistein), myristic acid, pyrazole, barbital, phenobarbital and CuSO4. NADPH-dependent oxidoreductase which catalyzes the reduction of a variety of compounds bearing carbonyl groups including ketosteroids, alpha-dicarbonyl compounds, aldehydes, aromatic ketones and quinones. Reduces all-trans-retinal and 9-cis retinal. Reduces 3-ketosteroids and benzil into 3alpha-hydroxysteroids and S-benzoin, respectively, in contrast to the stereoselectivity of primates DHRS4s which produce 3beta-hydroxysteroids and R-benzoin. In the reverse reaction, catalyze the NADP-dependent oxidation of 3alpha-hydroxysteroids and alcohol, but with much lower efficiency. Involved in the metabolism of 3alpha-hydroxysteroids, retinoid, isatin and xenobiotic carbonyl compounds. The sequence is that of Dehydrogenase/reductase SDR family member 4 (DHRS4) from Oryctolagus cuniculus (Rabbit).